A 118-amino-acid chain; its full sequence is UPF0231 protein PM0457 (118 aa).

This sequence belongs to the UPF0231 family.

The chain is UPF0231 protein PM0457 from Pasteurella multocida (strain Pm70).